Reading from the N-terminus, the 182-residue chain is MAEFPSKVSTRTSSPAQGVGASVSALRPDLGFVRSALGVLALLQLALGLLVWALIADTPYHLYPAYGWVMFVAVFLWLVTIVFFIIYLFQLHMKLYMVPWPLVLLIFFVAATVLYITAFIACAAAVDLTSLRGSRPYNQRSAASFFACLVMIAYGVSAFFSFQAWRGVGSNAATSQMAGGYS.

The Cytoplasmic segment spans residues M1 to S35. S9 carries the phosphoserine modification. One can recognise an MARVEL domain in the interval F32–R166. The helical transmembrane segment at A36–A56 threads the bilayer. Residues D57–W68 lie on the Extracellular side of the membrane. A helical membrane pass occupies residues V69–F89. The Cytoplasmic portion of the chain corresponds to Q90–P99. The chain crosses the membrane as a helical span at residues W100 to I120. Over A121–S141 the chain is Extracellular. A helical transmembrane segment spans residues A142 to F162. The Cytoplasmic portion of the chain corresponds to Q163–S182.

Belongs to the MAL family. As to quaternary structure, forms oligomers. Post-translationally, phosphorylated.

It localises to the membrane. The protein localises to the cell membrane. Its subcellular location is the myelin membrane. The protein resides in the apical cell membrane. Its function is as follows. Main component of the myelin sheath that plays an important role in myelin membrane biogenesis and myelination. Plays an essential function in apical endocytosis. Regulates epithelial development through the regulation of apical endocytosis. Part of the intracellular machinery that mediates basolateral-to-apical transport of ICAM-1, an essential adhesion receptor in epithelial cells, from the subapical compartment in hepatic epithelial cells. This Mus musculus (Mouse) protein is Plasmolipin (Pllp).